We begin with the raw amino-acid sequence, 723 residues long: Lim and transglutaminase domain protein ltd-1 (723 aa).

The LIM zinc-binding domain maps to 5–72; that stretch reads QHCNRCGKQV…SNHVPIAGPH (68 aa).

It belongs to the transglutaminase-like superfamily. Expressed in the Y and U rectal epithelial cells, in marginal cells of the terminal bulb and isthmus of the pharynx (at protein level).

The protein resides in the cytoplasm. Its subcellular location is the cytoskeleton. In terms of biological role, cytoskeleton-associated protein. May play a role in hypodermal cell development. This Caenorhabditis elegans protein is Lim and transglutaminase domain protein ltd-1.